Consider the following 291-residue polypeptide: MKRVFLFLITNLAVILVLSFSARLLGVDRFLTSNGLDMGMLLAFAALIGFGGSFISLLMSKTMAKWSTGAQVILRPSNEEESWLLNTVRQLSKKADLAMPEVAIYEGAPNAFATGPSRSKSLVAVSSGLLRSMDRKQVEAVLAHEVAHIQNGDMVTLTLIQGVVNTFVIFLARVFAYALDSFLRRDEDESGSPGIGYWISSIAFEIVFGILASIVVMYFSRKREFRADAGAAALIGDRRPMIEALRALGSLEAGKLPKEMAASGIAGGGMMALFSSHPPLESRIAALESAR.

2 helical membrane-spanning segments follow: residues 4–24 and 38–58; these read VFLFLITNLAVILVLSFSARL and MGMLLAFAALIGFGGSFISLL. Histidine 144 is a binding site for Zn(2+). Residue glutamate 145 is part of the active site. Histidine 148 is a Zn(2+) binding site. A run of 2 helical transmembrane segments spans residues 159–179 and 199–219; these read LIQGVVNTFVIFLARVFAYAL and ISSIAFEIVFGILASIVVMYF. Glutamate 224 contributes to the Zn(2+) binding site.

It belongs to the peptidase M48B family. The cofactor is Zn(2+).

The protein localises to the cell inner membrane. The polypeptide is Protease HtpX homolog (Chlorobium phaeovibrioides (strain DSM 265 / 1930) (Prosthecochloris vibrioformis (strain DSM 265))).